Reading from the N-terminus, the 503-residue chain is AMP phosphorylase (503 aa).

AMP contacts are provided by residues Gly168, 194 to 199 (SRAITS), and Thr203. Catalysis depends on Asp256, which acts as the Proton donor. Ser264 and Lys288 together coordinate AMP.

The protein belongs to the thymidine/pyrimidine-nucleoside phosphorylase family. Type 2 subfamily.

The catalysed reaction is AMP + phosphate = alpha-D-ribose 1,5-bisphosphate + adenine. The enzyme catalyses CMP + phosphate = cytosine + alpha-D-ribose 1,5-bisphosphate. It catalyses the reaction UMP + phosphate = alpha-D-ribose 1,5-bisphosphate + uracil. Its function is as follows. Catalyzes the conversion of AMP and phosphate to adenine and ribose 1,5-bisphosphate (R15P). Exhibits phosphorylase activity toward CMP and UMP in addition to AMP. Functions in an archaeal AMP degradation pathway, together with R15P isomerase and RubisCO. In Methanocaldococcus jannaschii (strain ATCC 43067 / DSM 2661 / JAL-1 / JCM 10045 / NBRC 100440) (Methanococcus jannaschii), this protein is AMP phosphorylase.